The chain runs to 154 residues: Probable prefoldin subunit 5 (154 aa).

This sequence belongs to the prefoldin subunit alpha family. In terms of assembly, heterohexamer of two PFD-alpha type and four PFD-beta type subunits.

Binds specifically to cytosolic chaperonin (c-CPN) and transfers target proteins to it. Binds to nascent polypeptide chain and promotes folding in an environment in which there are many competing pathways for nonnative proteins. The sequence is that of Probable prefoldin subunit 5 from Caenorhabditis briggsae.